We begin with the raw amino-acid sequence, 776 residues long: Homoaconitase, mitochondrial (776 aa).

Residues 1-24 (MVALRRAVALNAVAIARLQTRALT) constitute a mitochondrion transit peptide. Residues Cys-392, Cys-459, and Cys-462 each coordinate [4Fe-4S] cluster.

The protein belongs to the aconitase/IPM isomerase family. It depends on [4Fe-4S] cluster as a cofactor.

The protein localises to the mitochondrion. The enzyme catalyses (2R,3S)-homoisocitrate = cis-homoaconitate + H2O. It participates in amino-acid biosynthesis; L-lysine biosynthesis via AAA pathway; L-alpha-aminoadipate from 2-oxoglutarate: step 3/5. In terms of biological role, catalyzes the reversible hydration of cis-homoaconitate to (2R,3S)-homoisocitrate, a step in the alpha-aminoadipate pathway for lysine biosynthesis. This Gibberella zeae (strain ATCC MYA-4620 / CBS 123657 / FGSC 9075 / NRRL 31084 / PH-1) (Wheat head blight fungus) protein is Homoaconitase, mitochondrial (LYS4).